The primary structure comprises 178 residues: PRA1 family protein 2 (178 aa).

Residues 1–41 (MSEVRLPPLRALDDFVLGSARLVAPDPCDPQRWCHRVINNL) lie on the Cytoplasmic side of the membrane. Residues 42-62 (LYYQTNYLICFGLGLALAGYV) traverse the membrane as a helical segment. Residues 63 to 64 (RP) lie on the Extracellular side of the membrane. A helical membrane pass occupies residues 65–85 (LHTLLSALVVAVALGMLVCAA). The Cytoplasmic portion of the chain corresponds to 86-96 (ENRAAVRRCRR). The helical transmembrane segment at 97–119 (SHPAACLAAVLAVGFLVLWAAGG) threads the bilayer. Topologically, residues 120–122 (AGT) are extracellular. Residues 123–140 (FLLSIAGPVLLILVHASL) form a helical membrane-spanning segment. Over 141–178 (RLRNLKNKIENKIESIGLKRTPMGLLLEALGQEQEAGS) the chain is Cytoplasmic.

This sequence belongs to the PRA1 family. Interacts with CCR5 and GDE1.

The protein localises to the endosome membrane. In terms of biological role, may be involved in ER/Golgi transport and vesicular traffic. Plays a proapoptotic role in cerulenin-induced neuroblastoma apoptosis. This chain is PRA1 family protein 2 (PRAF2), found in Bos taurus (Bovine).